The sequence spans 93 residues: Small ribosomal subunit protein bS20 (93 aa).

It belongs to the bacterial ribosomal protein bS20 family.

Its function is as follows. Binds directly to 16S ribosomal RNA. The protein is Small ribosomal subunit protein bS20 of Hydrogenobaculum sp. (strain Y04AAS1).